The primary structure comprises 191 residues: Adenylate kinase (191 aa).

Residue Gly12–Thr17 coordinates ATP. The interval Ser34 to Val63 is NMP. AMP is bound by residues Thr35, Arg40, Glu61 to Val63, Gly88 to Arg91, and Gln95. The tract at residues Gly130–Asp136 is LID. Residue Arg131 coordinates ATP. Residues Arg133 and Arg145 each contribute to the AMP site. Residue Arg173 participates in ATP binding.

The protein belongs to the adenylate kinase family. Monomer.

It localises to the cytoplasm. The enzyme catalyses AMP + ATP = 2 ADP. The protein operates within purine metabolism; AMP biosynthesis via salvage pathway; AMP from ADP: step 1/1. Its function is as follows. Catalyzes the reversible transfer of the terminal phosphate group between ATP and AMP. Plays an important role in cellular energy homeostasis and in adenine nucleotide metabolism. This is Adenylate kinase from Helicobacter pylori (strain Shi470).